The sequence spans 287 residues: L-ascorbate peroxidase 3 (287 aa).

A2 bears the N-acetylalanine mark. H40 functions as the Proton acceptor in the catalytic mechanism. The disordered stretch occupies residues 46–66 (DAQSKTGGPNGSIRNEEEHTH). H160 is a heme b binding site. 3 residues coordinate K(+): T161, T177, and D184. The helical transmembrane segment at 259–279 (ILAQSAFGVAVAAAVVAFGYF) threads the bilayer. The AKR2A-binding sequence (ABS) required for peroxisome membrane targeting motif lies at 281–287 (EIRKRMK).

The protein belongs to the peroxidase family. Ascorbate peroxidase subfamily. In terms of assembly, interacts via its C-terminal region with AKR2A and AKR2B. Heme b serves as cofactor.

Its subcellular location is the peroxisome membrane. The protein localises to the glyoxysome membrane. It catalyses the reaction L-ascorbate + H2O2 = L-dehydroascorbate + 2 H2O. Plays a key role in hydrogen peroxide removal. In Arabidopsis thaliana (Mouse-ear cress), this protein is L-ascorbate peroxidase 3 (APX3).